The chain runs to 161 residues: Peptidyl-prolyl cis-trans isomerase-like 1 (161 aa).

The PPIase cyclophilin-type domain maps to 1–155 (MATDVAFDTS…DEVKIIRARV (155 aa)).

Belongs to the cyclophilin-type PPIase family. PPIL1 subfamily.

It carries out the reaction [protein]-peptidylproline (omega=180) = [protein]-peptidylproline (omega=0). Functionally, PPIases accelerate the folding of proteins. It catalyzes the cis-trans isomerization of proline imidic peptide bonds in oligopeptides. In Aspergillus oryzae (strain ATCC 42149 / RIB 40) (Yellow koji mold), this protein is Peptidyl-prolyl cis-trans isomerase-like 1 (cyp1).